The following is a 209-amino-acid chain: Vacuolar protein sorting-associated protein 28 homolog 1 (209 aa).

The region spanning 1 to 99 is the VPS28 N-terminal domain; that stretch reads MEVKLWNDKR…TSGVPATVEH (99 aa). In terms of domain architecture, VPS28 C-terminal spans 109 to 205; sequence SSASVVAECV…SYNSFMAALP (97 aa).

Belongs to the VPS28 family. Component of the endosomal sorting required for transport complex I (ESCRT-I), composed of ELC, VPS28 and VPS37. Interacts with ELC.

Its subcellular location is the endosome. In terms of biological role, component of the ESCRT-I complex (endosomal sorting complex required for transport I), a regulator of vesicular trafficking process. Required for the sorting of endocytic ubiquitinated cargos into multivesicular bodies (MVBs). Mediates the association to the ESCRT-0 complex. This chain is Vacuolar protein sorting-associated protein 28 homolog 1 (VPS28-1), found in Arabidopsis thaliana (Mouse-ear cress).